Consider the following 98-residue polypeptide: Putative protein adenylyltransferase MJ0128 (98 aa).

Positions 31–45 match the GSX(10)DXD motif motif; the sequence is GSYARNEQTEKSDID. The Mg(2+) site is built by aspartate 43, aspartate 45, and aspartate 75.

Belongs to the MntA antitoxin family. Probably forms a complex with cognate toxin MJ0127. Mg(2+) is required as a cofactor.

The catalysed reaction is L-tyrosyl-[protein] + ATP = O-(5'-adenylyl)-L-tyrosyl-[protein] + diphosphate. The enzyme catalyses O-(5'-adenylyl)-L-tyrosyl-[protein] + ATP = O-[5'-(adenylyl-(5'-&gt;3')-adenylyl)]-L-tyrosyl-[protein] + diphosphate. Its function is as follows. Probable antitoxin component of a putative type VII toxin-antitoxin (TA) system. Neutralizes cognate toxic MJ0127 by di-AMPylation. The polypeptide is Putative protein adenylyltransferase MJ0128 (Methanocaldococcus jannaschii (strain ATCC 43067 / DSM 2661 / JAL-1 / JCM 10045 / NBRC 100440) (Methanococcus jannaschii)).